The sequence spans 520 residues: Cobyric acid synthase (520 aa).

The GATase cobBQ-type domain maps to 275-453; the sequence is VLRVAVIRLP…WHGVLENDAF (179 aa). The active-site Nucleophile is the Cys-356. The active site involves His-445.

The protein belongs to the CobB/CobQ family. CobQ subfamily.

It participates in cofactor biosynthesis; adenosylcobalamin biosynthesis. Catalyzes amidations at positions B, D, E, and G on adenosylcobyrinic A,C-diamide. NH(2) groups are provided by glutamine, and one molecule of ATP is hydrogenolyzed for each amidation. The sequence is that of Cobyric acid synthase from Frankia casuarinae (strain DSM 45818 / CECT 9043 / HFP020203 / CcI3).